Consider the following 309-residue polypeptide: Thiamine-monophosphate kinase (309 aa).

Mg(2+) is bound by residues D41 and D55. Position 62 (H62) interacts with substrate. Mg(2+) is bound by residues D83, D128, and D215. 127–128 (GD) is an ATP binding site. S217 is a binding site for ATP. Mg(2+) is bound at residue D218. E268 lines the substrate pocket.

The protein belongs to the thiamine-monophosphate kinase family.

The enzyme catalyses thiamine phosphate + ATP = thiamine diphosphate + ADP. The protein operates within cofactor biosynthesis; thiamine diphosphate biosynthesis; thiamine diphosphate from thiamine phosphate: step 1/1. In terms of biological role, catalyzes the ATP-dependent phosphorylation of thiamine-monophosphate (TMP) to form thiamine-pyrophosphate (TPP), the active form of vitamin B1. This is Thiamine-monophosphate kinase from Methanopyrus kandleri (strain AV19 / DSM 6324 / JCM 9639 / NBRC 100938).